The primary structure comprises 137 residues: Photosystem II reaction center W protein, chloroplastic (137 aa).

A chloroplast-targeting transit peptide spans 1–64 (MATITASSSA…ETTTTTNKSM (64 aa)). Residues 65 to 83 (GASLLAAAAAATISNPAMA) constitute a thylakoid transit peptide. Residues 84-103 (LVDERMSTEGTGLPFGLSNN) are Lumenal, thylakoid-facing. Residues 104 to 123 (LLGWILFGVFGLIWALYFVY) traverse the membrane as a helical segment. Residues 124-137 (ASGLEEDEESGLSL) lie on the Stromal side of the membrane.

As to quaternary structure, part of the photosystem II complex. PSII is composed of 1 copy each of membrane proteins PsbA, PsbB, PsbC, PsbD, numerous small proteins, at least 3 peripheral proteins of the oxygen-evolving complex and a large number of cofactors. It forms dimeric complexes.

The protein resides in the plastid. It localises to the chloroplast thylakoid membrane. Its function is as follows. Stabilizes dimeric photosystem II (PSII). In its absence no dimeric PSII accumulates and there is a reduction of monomeric PSII. The chain is Photosystem II reaction center W protein, chloroplastic from Spinacia oleracea (Spinach).